The following is a 520-amino-acid chain: General transcription factor 3C polypeptide 5 (520 aa).

Position 2 is an N-acetylalanine (A2). Residues 466-520 (LFSNTGKADRGKEQLMFESGEEEEEEEEEEEEEEEDFKPSDGSENEMETEILDYV) are disordered. 2 stretches are compositionally biased toward acidic residues: residues 484 to 501 (SGEE…EEED) and 508 to 520 (SENE…LDYV).

The protein belongs to the TFIIIC subunit 5 family. In terms of assembly, part of the TFIIIC subcomplex TFIIIC2, consisting of six subunits, GTF3C1, GTF3C2, GTF3C3, GTF3C4, GTF3C5 and GTF3C6. Interacts with BRF1, GTF3C6 and TBP.

It is found in the nucleus. Functionally, involved in RNA polymerase III-mediated transcription. Integral, tightly associated component of the DNA-binding TFIIIC2 subcomplex that directly binds tRNA and virus-associated RNA promoters. The sequence is that of General transcription factor 3C polypeptide 5 (Gtf3c5) from Mus musculus (Mouse).